The chain runs to 122 residues: Large ribosomal subunit protein uL14c (122 aa).

The protein belongs to the universal ribosomal protein uL14 family. As to quaternary structure, part of the 50S ribosomal subunit.

The protein resides in the plastid. It localises to the chloroplast. Binds to 23S rRNA. This is Large ribosomal subunit protein uL14c from Gossypium barbadense (Sea Island cotton).